Consider the following 223-residue polypeptide: Ribose-5-phosphate isomerase A (223 aa).

Substrate-binding positions include Thr28–Thr31, Asp81–Asp84, and Lys94–Gly97. Glu103 functions as the Proton acceptor in the catalytic mechanism. Lys121 is a substrate binding site.

This sequence belongs to the ribose 5-phosphate isomerase family. In terms of assembly, homodimer.

The enzyme catalyses aldehydo-D-ribose 5-phosphate = D-ribulose 5-phosphate. Its pathway is carbohydrate degradation; pentose phosphate pathway; D-ribose 5-phosphate from D-ribulose 5-phosphate (non-oxidative stage): step 1/1. Functionally, catalyzes the reversible conversion of ribose-5-phosphate to ribulose 5-phosphate. In Herminiimonas arsenicoxydans, this protein is Ribose-5-phosphate isomerase A.